The primary structure comprises 236 residues: Ribose-5-phosphate isomerase A (236 aa).

Residues 31-34, 84-87, and 97-100 contribute to the substrate site; these read TGST, DGAD, and KGGG. The active-site Proton acceptor is Glu106. Lys124 lines the substrate pocket.

The protein belongs to the ribose 5-phosphate isomerase family. As to quaternary structure, homodimer.

It catalyses the reaction aldehydo-D-ribose 5-phosphate = D-ribulose 5-phosphate. The protein operates within carbohydrate degradation; pentose phosphate pathway; D-ribose 5-phosphate from D-ribulose 5-phosphate (non-oxidative stage): step 1/1. Catalyzes the reversible conversion of ribose-5-phosphate to ribulose 5-phosphate. The sequence is that of Ribose-5-phosphate isomerase A from Polynucleobacter necessarius subsp. necessarius (strain STIR1).